The chain runs to 222 residues: Ribosome maturation factor RimM (222 aa).

The tract at residues methionine 1–glutamate 22 is disordered. A PRC barrel domain is found at glutamate 145 to tyrosine 222.

The protein belongs to the RimM family. Binds ribosomal protein uS19.

Its subcellular location is the cytoplasm. Functionally, an accessory protein needed during the final step in the assembly of 30S ribosomal subunit, possibly for assembly of the head region. Essential for efficient processing of 16S rRNA. May be needed both before and after RbfA during the maturation of 16S rRNA. It has affinity for free ribosomal 30S subunits but not for 70S ribosomes. In Cupriavidus necator (strain ATCC 17699 / DSM 428 / KCTC 22496 / NCIMB 10442 / H16 / Stanier 337) (Ralstonia eutropha), this protein is Ribosome maturation factor RimM.